A 285-amino-acid chain; its full sequence is Meiotically up-regulated gene 125 protein (285 aa).

The protein resides in the cytoplasm. Its subcellular location is the nucleus. Has a role in meiosis. The polypeptide is Meiotically up-regulated gene 125 protein (mug125) (Schizosaccharomyces pombe (strain 972 / ATCC 24843) (Fission yeast)).